The primary structure comprises 435 residues: Mitogen-activated protein kinase HOG1 (435 aa).

Thr-2 is subject to N-acetylthreonine. The 280-residue stretch at 23-302 (YNDLNPVGMG…AADALAHPYS (280 aa)) folds into the Protein kinase domain. ATP is bound by residues 29–37 (VGMGAFGLV) and Lys-52. Asp-144 acts as the Proton acceptor in catalysis. Residues Cys-156 and Cys-161 each coordinate arsenite. Thr-174 is modified (phosphothreonine; by PBS2). The TXY motif lies at 174–176 (TGY). The residue at position 176 (Tyr-176) is a Phosphotyrosine; by PBS2. An arsenite-binding site is contributed by Cys-205.

The protein belongs to the protein kinase superfamily. Ser/Thr protein kinase family. MAP kinase subfamily. HOG1 sub-subfamily. Interacts with CDC37, HOT1, KIN28, PTP2, PTP3, RBP1, RCK2, RPD3, SIC1, SMP1 and SIN4. The cofactor is Mg(2+). Post-translationally, activated by PBS2-mediated concomitant phosphorylation at Thr-174 and Tyr-176. Dually phosphorylated on Thr-174 and Tyr-176, which activates the enzyme.

The protein resides in the cytoplasm. It localises to the nucleus. The enzyme catalyses L-seryl-[protein] + ATP = O-phospho-L-seryl-[protein] + ADP + H(+). It catalyses the reaction L-threonyl-[protein] + ATP = O-phospho-L-threonyl-[protein] + ADP + H(+). Activated by tyrosine and threonine phosphorylation. Inactivated by dephosphorylation via recruitment of PTC1 to the PBS2-HOG1 complex after adaptation to osmotic stress. PTP2 and PTP3 inactivate HOG1 by dephosphorylating Tyr-176, while the PP2Cs PTC1 and PTC2 or PTC3 dephosphorylate Thr-174 in the activation loop. Its function is as follows. Proline-directed serine/threonine-protein kinase involved in a signal transduction pathway that is activated by changes in the osmolarity of the extracellular environment. Controls osmotic regulation of transcription via the stress response element (STRE) in promoters of target genes. Upon osmotic shock, associates with the SKO1-SSN6-TUP1 complex, phosphorylates SKO1, and converts it into an activator that subsequently recruits Swi/Snf and SAGA complexes. Activates the SMP1 transcription factor and the RCK2 kinase, both also involved in the regulation of the expression of a subset of osmotic stress-related genes. Phosphorylation of HSL1 by HOG1 leads to a G2 arrest essential for cell survival at high osmolarity. Also mediates cell-cycle arrest in G1 phase by the dual targeting of SIC1. Phosphorylates methyltransferase DOT1 at least on 'Ser-565' and 'Thr-576'. Regulates MFA2 ARE-mediated translation in response to carbon source. Targets RPD3 histone deacetylase to osmoresponsive promoters to induce gene expression on stress. Required for the Golgi apparatus localization of MNN1. Plays an essential role in maintaining water homeostasis, arsenite detoxification, copper-resistance, cold-resistance, hydrogen peroxide response, adaptation to citric acid stress, and repression of the mating pathway activity. Functions as an arsenic sensor and effector via direct binding to arsenic and subsequent phosphorylation of the ARR1 transcription factor. The sequence is that of Mitogen-activated protein kinase HOG1 (HOG1) from Saccharomyces cerevisiae (strain ATCC 204508 / S288c) (Baker's yeast).